The sequence spans 347 residues: Histone deacetylase 11 (347 aa).

The segment at 14-326 is histone deacetylase; that stretch reads TRWPIVYSPR…LNLFGLGLIG (313 aa). Histidine 143 is an active-site residue.

This sequence belongs to the histone deacetylase family. In terms of assembly, interacts with HDAC6. As to expression, weakly expressed in most tissues. Strongly expressed in brain, heart, skeletal muscle, kidney and testis.

It localises to the nucleus. The enzyme catalyses N(6)-acetyl-L-lysyl-[histone] + H2O = L-lysyl-[histone] + acetate. Its function is as follows. Responsible for the deacetylation of lysine residues on the N-terminal part of the core histones (H2A, H2B, H3 and H4). Histone deacetylation gives a tag for epigenetic repression and plays an important role in transcriptional regulation, cell cycle progression and developmental events. Histone deacetylases act via the formation of large multiprotein complexes. In Homo sapiens (Human), this protein is Histone deacetylase 11 (HDAC11).